Here is a 644-residue protein sequence, read N- to C-terminus: Exoribonuclease 2 (644 aa).

The 328-residue stretch at 189–516 (REDLTALDFV…NHRLLKAVIK (328 aa)) folds into the RNB domain. The S1 motif domain maps to 561-643 (GTRFAAEIVD…ETRGIIARPV (83 aa)).

Belongs to the RNR ribonuclease family. RNase II subfamily.

The protein localises to the cytoplasm. It catalyses the reaction Exonucleolytic cleavage in the 3'- to 5'-direction to yield nucleoside 5'-phosphates.. Its function is as follows. Involved in mRNA degradation. Hydrolyzes single-stranded polyribonucleotides processively in the 3' to 5' direction. This is Exoribonuclease 2 from Shigella sonnei (strain Ss046).